Here is a 348-residue protein sequence, read N- to C-terminus: Nicotinate-nucleotide pyrophosphorylase [carboxylating], chloroplastic (348 aa).

The N-terminal 41 residues, 1-41 (MISVSRFLSPQFYAIPRSFVKMSASATQTAGEVSMGIKPPS), are a transit peptide targeting the chloroplast. Residues Arg-139, 170-172 (TRK), Arg-194, Lys-204, Glu-237, Asp-264, 296-298 (SGN), and 317-319 (SGA) each bind substrate.

This sequence belongs to the NadC/ModD family.

It localises to the plastid. Its subcellular location is the chloroplast. The enzyme catalyses nicotinate beta-D-ribonucleotide + CO2 + diphosphate = quinolinate + 5-phospho-alpha-D-ribose 1-diphosphate + 2 H(+). It participates in cofactor biosynthesis; NAD(+) biosynthesis; nicotinate D-ribonucleotide from quinolinate: step 1/1. Functionally, involved in the biosynthesis of NAD(+). Catalyzes the conversion of quinolate to nicotinate to nicotinate beta-D-ribonucleotide. The chain is Nicotinate-nucleotide pyrophosphorylase [carboxylating], chloroplastic from Arabidopsis thaliana (Mouse-ear cress).